A 269-amino-acid polypeptide reads, in one-letter code: Small ribosomal subunit protein uS2 (269 aa).

Residues 235 to 269 form a disordered region; the sequence is FDAKNPLKPQNYNTLNKRPYQDSPRKPSYQNQNQR.

Belongs to the universal ribosomal protein uS2 family.

The polypeptide is Small ribosomal subunit protein uS2 (Aster yellows witches'-broom phytoplasma (strain AYWB)).